The following is a 550-amino-acid chain: uncharacterized protein (550 aa).

A signal peptide spans 1–53 (MVVIANKGALWAYYCKRLLNSVTYMMYPLIRKRTMKKLLLIVGLLLACSTVMR). N296 and N518 each carry an N-linked (GlcNAc...) asparagine glycan.

The protein resides in the endoplasmic reticulum. This is an uncharacterized protein from Schizosaccharomyces pombe (strain 972 / ATCC 24843) (Fission yeast).